A 198-amino-acid polypeptide reads, in one-letter code: Ribosome maturation factor RimM (198 aa).

Residues 1 to 21 are disordered; the sequence is MPPPTASTPDDSADPGPDFAD. The region spanning 122–195 is the PRC barrel domain; the sequence is DDELFADDLV…RIVVRPIDGL (74 aa).

Belongs to the RimM family. Binds ribosomal protein uS19.

The protein localises to the cytoplasm. Functionally, an accessory protein needed during the final step in the assembly of 30S ribosomal subunit, possibly for assembly of the head region. Essential for efficient processing of 16S rRNA. May be needed both before and after RbfA during the maturation of 16S rRNA. It has affinity for free ribosomal 30S subunits but not for 70S ribosomes. This is Ribosome maturation factor RimM from Salinibacter ruber (strain DSM 13855 / M31).